Here is a 522-residue protein sequence, read N- to C-terminus: Alanine aminotransferase 2 (522 aa).

Lysine 340 carries the N6-(pyridoxal phosphate)lysine modification. Residues lysine 414, lysine 504, and lysine 511 each carry the N6-acetyllysine modification.

The protein belongs to the class-I pyridoxal-phosphate-dependent aminotransferase family. Alanine aminotransferase subfamily. In terms of assembly, homodimer. The cofactor is pyridoxal 5'-phosphate. In terms of tissue distribution, specifically induced in fatty liver. Highly expressed in muscle, liver and white adipose tissue. Moderately expressed in brain and kidney and expressed at low levels in the heart.

It catalyses the reaction L-alanine + 2-oxoglutarate = pyruvate + L-glutamate. The protein operates within amino-acid degradation; L-alanine degradation via transaminase pathway; pyruvate from L-alanine: step 1/1. Its function is as follows. Catalyzes the reversible transamination between alanine and 2-oxoglutarate to form pyruvate and glutamate. The polypeptide is Alanine aminotransferase 2 (Gpt2) (Mus musculus (Mouse)).